The sequence spans 1166 residues: Peroxisomal ATPase PEX6 (1166 aa).

This sequence belongs to the AAA ATPase family. Interacts with PEX1; forming the PEX1-PEX6 AAA ATPase complex, which is composed of a heterohexamer formed by a trimer of PEX1-PEX6 dimers.

It is found in the membrane. It catalyses the reaction ATP + H2O = ADP + phosphate + H(+). Functionally, component of the PEX1-PEX6 AAA ATPase complex involved in peroxisome biosynthesis. The complex acts as a protein dislocase complex that mediates the ATP-dependent extraction of the PEX5 receptor from peroxisomal membranes, an essential step for PEX5 recycling. Specifically recognizes PEX5 monoubiquitinated at 'Cys-6', and pulls it out of the peroxisome lumen through the PEX2-PEX10-PEX12 retrotranslocation channel. Extraction by the PEX1-PEX6 AAA ATPase complex is accompanied by unfolding of the TPR repeats and release of bound cargo from PEX5. This chain is Peroxisomal ATPase PEX6, found in Komagataella phaffii (strain GS115 / ATCC 20864) (Yeast).